The primary structure comprises 1208 residues: DNA-directed RNA polymerase subunit beta (1208 aa).

Belongs to the RNA polymerase beta chain family. In terms of assembly, the RNAP catalytic core consists of 2 alpha, 1 beta, 1 beta' and 1 omega subunit. When a sigma factor is associated with the core the holoenzyme is formed, which can initiate transcription.

The catalysed reaction is RNA(n) + a ribonucleoside 5'-triphosphate = RNA(n+1) + diphosphate. Its function is as follows. DNA-dependent RNA polymerase catalyzes the transcription of DNA into RNA using the four ribonucleoside triphosphates as substrates. In Enterococcus faecium (Streptococcus faecium), this protein is DNA-directed RNA polymerase subunit beta.